The primary structure comprises 438 residues: Chromosomal replication initiator protein DnaA (438 aa).

Positions 1–71 (MTTKEFLTII…CFEIYDGSKP (71 aa)) are domain I, interacts with DnaA modulators. Positions 71–100 (PTIEIKLSNEKKSKKEILKEQTQNESTEST) are domain II. A domain III, AAA+ region region spans residues 101-315 (ILNPSYTFDS…GVLIRINASA (215 aa)). Residues Gly145, Gly147, Lys148, and Thr149 each contribute to the ATP site. The segment at 316-438 (SLLNQEITLP…LKNKIINSRE (123 aa)) is domain IV, binds dsDNA.

It belongs to the DnaA family. In terms of assembly, oligomerizes as a right-handed, spiral filament on DNA at oriC.

Its subcellular location is the cytoplasm. Its function is as follows. Plays an essential role in the initiation and regulation of chromosomal replication. ATP-DnaA binds to the origin of replication (oriC) to initiate formation of the DNA replication initiation complex once per cell cycle. Binds the DnaA box (a 9 base pair repeat at the origin) and separates the double-stranded (ds)DNA. Forms a right-handed helical filament on oriC DNA; dsDNA binds to the exterior of the filament while single-stranded (ss)DNA is stabiized in the filament's interior. The ATP-DnaA-oriC complex binds and stabilizes one strand of the AT-rich DNA unwinding element (DUE), permitting loading of DNA polymerase. After initiation quickly degrades to an ADP-DnaA complex that is not apt for DNA replication. Binds acidic phospholipids. This chain is Chromosomal replication initiator protein DnaA, found in Aliarcobacter butzleri (strain RM4018) (Arcobacter butzleri).